A 64-amino-acid polypeptide reads, in one-letter code: Large ribosomal subunit protein bL35c (64 aa).

The protein belongs to the bacterial ribosomal protein bL35 family.

The protein localises to the plastid. It is found in the chloroplast. The chain is Large ribosomal subunit protein bL35c from Cyanidium caldarium (Red alga).